The primary structure comprises 98 residues: Small ribosomal subunit protein uS19 (98 aa).

2 disordered regions span residues 1 to 30 (MARS…KKSV) and 78 to 98 (RTFH…PAKK). A compositionally biased stretch (basic and acidic residues) spans 9–24 (PFADKHLTKKVEDANK).

It belongs to the universal ribosomal protein uS19 family.

In terms of biological role, protein S19 forms a complex with S13 that binds strongly to the 16S ribosomal RNA. The protein is Small ribosomal subunit protein uS19 of Anaeromyxobacter dehalogenans (strain 2CP-C).